We begin with the raw amino-acid sequence, 285 residues long: 2-hydroxy-6-oxononadienedioate/2-hydroxy-6-oxononatrienedioate hydrolase 1 (285 aa).

Histidine 265 serves as the catalytic Proton acceptor.

Belongs to the AB hydrolase superfamily. MhpC family. Homodimer.

It carries out the reaction (2Z,4E)-2-hydroxy-6-oxonona-2,4-dienedioate + H2O = (2Z)-2-hydroxypenta-2,4-dienoate + succinate + H(+). The catalysed reaction is (2Z,4E,7E)-2-hydroxy-6-oxonona-2,4,7-trienedioate + H2O = (2Z)-2-hydroxypenta-2,4-dienoate + fumarate + H(+). Its pathway is aromatic compound metabolism; 3-phenylpropanoate degradation. Functionally, catalyzes the cleavage of the C5-C6 bond of 2-hydroxy-6-oxononadienedioate and 2-hydroxy-6-oxononatrienedioate, a dienol ring fission product of the bacterial meta-cleavage pathway for degradation of phenylpropionic acid. This is 2-hydroxy-6-oxononadienedioate/2-hydroxy-6-oxononatrienedioate hydrolase 1 from Pseudomonas putida (Arthrobacter siderocapsulatus).